The following is a 572-amino-acid chain: Putative acyl-CoA synthetase CCNA_01223 (572 aa).

The protein belongs to the ATP-dependent AMP-binding enzyme family.

It participates in lipid metabolism; sphingolipid metabolism. In terms of biological role, involved in de novo bacterial ceramide synthesis. This Caulobacter vibrioides (strain NA1000 / CB15N) (Caulobacter crescentus) protein is Putative acyl-CoA synthetase CCNA_01223.